Reading from the N-terminus, the 287-residue chain is Probable endonuclease 4 (287 aa).

Positions 69, 109, 146, 180, 183, 217, 230, 232, and 262 each coordinate Zn(2+).

This sequence belongs to the AP endonuclease 2 family. It depends on Zn(2+) as a cofactor.

The catalysed reaction is Endonucleolytic cleavage to 5'-phosphooligonucleotide end-products.. Endonuclease IV plays a role in DNA repair. It cleaves phosphodiester bonds at apurinic or apyrimidinic (AP) sites, generating a 3'-hydroxyl group and a 5'-terminal sugar phosphate. This is Probable endonuclease 4 from Petrotoga mobilis (strain DSM 10674 / SJ95).